Here is a 395-residue protein sequence, read N- to C-terminus: Elongation factor Tu (395 aa).

In terms of domain architecture, tr-type G spans 10–204 (KPHLNIGTIG…AVDNWIEEPV (195 aa)). A G1 region spans residues 19 to 26 (GHVDHGKT). Position 19–26 (19–26 (GHVDHGKT)) interacts with GTP. Thr26 serves as a coordination point for Mg(2+). The interval 60–64 (GITIN) is G2. Positions 81–84 (DCPG) are G3. GTP-binding positions include 81–85 (DCPGH) and 136–139 (NKVD). Residues 136–139 (NKVD) are G4. The G5 stretch occupies residues 174–176 (SAL).

It belongs to the TRAFAC class translation factor GTPase superfamily. Classic translation factor GTPase family. EF-Tu/EF-1A subfamily. As to quaternary structure, monomer.

Its subcellular location is the cytoplasm. The catalysed reaction is GTP + H2O = GDP + phosphate + H(+). In terms of biological role, GTP hydrolase that promotes the GTP-dependent binding of aminoacyl-tRNA to the A-site of ribosomes during protein biosynthesis. The sequence is that of Elongation factor Tu from Flavobacterium johnsoniae (strain ATCC 17061 / DSM 2064 / JCM 8514 / BCRC 14874 / CCUG 350202 / NBRC 14942 / NCIMB 11054 / UW101) (Cytophaga johnsonae).